The following is a 416-amino-acid chain: E3 ubiquitin-protein ligase makorin-2 (416 aa).

2 consecutive C3H1-type zinc fingers follow at residues 2–29 (STKQ…HDLA) and 31–58 (SKPS…HTKP). The interval 61–144 (AAGGAVGPAP…DPQTSPEMKP (84 aa)) is disordered. Residues 95 to 123 (HSNEPGKREKKTLVLRDRNLTGLAEDKTP) are compositionally biased toward basic and acidic residues. Position 139 is a phosphoserine (serine 139). The segment at 165–192 (SNEPQLCPYAAAGECRFGDACVYLHGDM) adopts a C3H1-type 3 zinc-finger fold. Residues 193–222 (CEICRLQVLHPFDPEQRKAHEKMCMSTFEH) form a makorin-type Cys-His region. An RING-type zinc finger spans residues 238-292 (CSICMEVILEKASASERRFGILSNCSHTYCLSCIRQWRCAKQFENPIIKSCPECR). Residues 321 to 350 (GMGKKACKYFEQGKGTCPFGSKCLYRHAYP) form a C3H1-type 4 zinc finger.

Interacts with PDLIM2 (via LIM zinc-binding domain). Interacts with RELA. In terms of tissue distribution, highly expressed in the testis, and lower expression in the brain, thymus, heart, lung, liver, spleen, kidney, ovary, uterus, and seminal vesicle (at protein level). Expressed in primary immune cells, such as CD4-positive and CD8-positive T cells, CD19-positive B cells and CD11c-positive dendritic cells, and in embryonic fibroblasts (at protein level).

Its subcellular location is the cytoplasm. The protein localises to the nucleus. The enzyme catalyses S-ubiquitinyl-[E2 ubiquitin-conjugating enzyme]-L-cysteine + [acceptor protein]-L-lysine = [E2 ubiquitin-conjugating enzyme]-L-cysteine + N(6)-ubiquitinyl-[acceptor protein]-L-lysine.. Its pathway is protein modification; protein ubiquitination. Functionally, E3 ubiquitin ligase catalyzing the covalent attachment of ubiquitin moieties onto substrate proteins. Promotes the polyubiquitination and proteasome-dependent degradation of RELA/p65, thereby suppressing RELA-mediated NF-kappa-B transactivation and negatively regulating inflammatory responses. Plays a role in the regulation of spermiation and in male fertility. In Mus musculus (Mouse), this protein is E3 ubiquitin-protein ligase makorin-2 (Mkrn2).